A 156-amino-acid polypeptide reads, in one-letter code: Probable cyclic pyranopterin monophosphate synthase (156 aa).

109–110 (MD) contributes to the substrate binding site. Residue Asp124 is part of the active site.

The protein belongs to the MoaC family. Homohexamer; trimer of dimers.

It catalyses the reaction (8S)-3',8-cyclo-7,8-dihydroguanosine 5'-triphosphate = cyclic pyranopterin phosphate + diphosphate. Its pathway is cofactor biosynthesis; molybdopterin biosynthesis. Its function is as follows. Catalyzes the conversion of (8S)-3',8-cyclo-7,8-dihydroguanosine 5'-triphosphate to cyclic pyranopterin monophosphate (cPMP). The protein is Probable cyclic pyranopterin monophosphate synthase of Methanopyrus kandleri (strain AV19 / DSM 6324 / JCM 9639 / NBRC 100938).